The following is a 300-amino-acid chain: Estradiol 17-beta-dehydrogenase 11 (300 aa).

Positions Met-1–Leu-19 are cleaved as a signal peptide. Leu-40–Val-64 contacts NADP(+). Ser-172 is a binding site for substrate. Tyr-185 (proton acceptor) is an active-site residue.

Belongs to the short-chain dehydrogenases/reductases (SDR) family. 17-beta-HSD 3 subfamily.

Its subcellular location is the endoplasmic reticulum. It is found in the lipid droplet. It carries out the reaction 17beta-estradiol + NAD(+) = estrone + NADH + H(+). The enzyme catalyses 17beta-estradiol + NADP(+) = estrone + NADPH + H(+). In terms of biological role, can convert androstan-3-alpha,17-beta-diol (3-alpha-diol) to androsterone in vitro, suggesting that it may participate in androgen metabolism during steroidogenesis. May act by metabolizing compounds that stimulate steroid synthesis and/or by generating metabolites that inhibit it. Has no activity toward DHEA (dehydroepiandrosterone), or A-dione (4-androste-3,17-dione), and only a slight activity toward testosterone to A-dione. The protein is Estradiol 17-beta-dehydrogenase 11 (HSD17B11) of Pongo abelii (Sumatran orangutan).